Consider the following 273-residue polypeptide: Ribosomal RNA small subunit methyltransferase A (273 aa).

Asn-17, Leu-19, Gly-44, Glu-65, and Asn-111 together coordinate S-adenosyl-L-methionine.

It belongs to the class I-like SAM-binding methyltransferase superfamily. rRNA adenine N(6)-methyltransferase family. RsmA subfamily.

The protein resides in the cytoplasm. The enzyme catalyses adenosine(1518)/adenosine(1519) in 16S rRNA + 4 S-adenosyl-L-methionine = N(6)-dimethyladenosine(1518)/N(6)-dimethyladenosine(1519) in 16S rRNA + 4 S-adenosyl-L-homocysteine + 4 H(+). Its function is as follows. Specifically dimethylates two adjacent adenosines (A1518 and A1519) in the loop of a conserved hairpin near the 3'-end of 16S rRNA in the 30S particle. May play a critical role in biogenesis of 30S subunits. This is Ribosomal RNA small subunit methyltransferase A from Buchnera aphidicola subsp. Acyrthosiphon pisum (strain APS) (Acyrthosiphon pisum symbiotic bacterium).